The chain runs to 156 residues: ATP synthase subunit b (156 aa).

A helical membrane pass occupies residues 11–31; it reads AIAFILFVWFCMKYVWPPLMA.

This sequence belongs to the ATPase B chain family. In terms of assembly, F-type ATPases have 2 components, F(1) - the catalytic core - and F(0) - the membrane proton channel. F(1) has five subunits: alpha(3), beta(3), gamma(1), delta(1), epsilon(1). F(0) has three main subunits: a(1), b(2) and c(10-14). The alpha and beta chains form an alternating ring which encloses part of the gamma chain. F(1) is attached to F(0) by a central stalk formed by the gamma and epsilon chains, while a peripheral stalk is formed by the delta and b chains.

It is found in the cell inner membrane. In terms of biological role, f(1)F(0) ATP synthase produces ATP from ADP in the presence of a proton or sodium gradient. F-type ATPases consist of two structural domains, F(1) containing the extramembraneous catalytic core and F(0) containing the membrane proton channel, linked together by a central stalk and a peripheral stalk. During catalysis, ATP synthesis in the catalytic domain of F(1) is coupled via a rotary mechanism of the central stalk subunits to proton translocation. Its function is as follows. Component of the F(0) channel, it forms part of the peripheral stalk, linking F(1) to F(0). This is ATP synthase subunit b from Enterobacter sp. (strain 638).